Here is a 362-residue protein sequence, read N- to C-terminus: RING finger protein 32 (362 aa).

An RING-type 1; atypical zinc finger spans residues 127 to 169 (CPICKEEFELRPQVLLSCSHVFHKACLQAFEKFTNKKTCPLCR). Residues 186–215 (RIKCVTRIQAYWRGCVVRKWYRNLRKTVPP) form the IQ domain. Residues 293-352 (CSICLAPLSAAGGQRVGAGRRSREMALLSCSHVFHHACLLALEEFSVGDRPPFHACPLCR) form an RING-type 2; atypical zinc finger.

As to expression, highly expressed in testis, less abundant in ovary.

Its subcellular location is the cytoplasm. Functionally, may play a role in sperm formation. The chain is RING finger protein 32 (RNF32) from Homo sapiens (Human).